The sequence spans 296 residues: Homeobox protein SIX2 (296 aa).

The homeobox DNA-binding region spans 124-183 (GEETSYCFKEKSRSVLREWYAHNPYPSPREKRELAEATGLTTTQVSNWFKNRRQRDRAAE). Residues 168-284 (VSNWFKNRRQ…HHHSLQDSIL (117 aa)) are disordered. The segment covering 179–190 (DRAAEAKERENS) has biased composition (basic and acidic residues). Composition is skewed to low complexity over residues 191–206 (ENSN…SSLN) and 228–237 (HSSSSPALLL). The span at 254 to 264 (PPGPSAVPVPV) shows a compositional bias: pro residues.

Belongs to the SIX/Sine oculis homeobox family. In terms of assembly, interacts with TCF7L2; in a canonical Wnt signaling independent manner; prevents transcription of differentiation genes in cap mesenchyme. Interacts with OSR1; form a strong repressor complex with TCF7L2, TLE2 and TLE3 to prevent the activation of Wnt/beta-catenin target genes in the cap mesenchyme. Interacts with HOXA11, EYA1 and EYA3. As to expression, expressed in phalangeal tendons, in smooth muscle and in head and body mesenchyme.

It is found in the nucleus. In terms of biological role, transcription factor that plays an important role in the development of several organs, including kidney, skull and stomach. During kidney development, maintains cap mesenchyme multipotent nephron progenitor cells in an undifferentiated state by opposing the inductive signals emanating from the ureteric bud and cooperates with WNT9B to promote renewing progenitor cells proliferation. Acts through its interaction with TCF7L2 and OSR1 in a canonical Wnt signaling independent manner preventing transcription of differentiation genes in cap mesenchyme such as WNT4. Also acts independently of OSR1 to activate expression of many cap mesenchyme genes, including itself, GDNF and OSR1. During craniofacial development plays a role in growth and elongation of the cranial base through regulation of chondrocyte differentiation. During stomach organogenesis, controls pyloric sphincter formation and mucosal growth through regulation of a gene network including NKX2-5, BMPR1B, BMP4, SOX9 and GREM1. During branchial arch development, acts to mediate HOXA2 control over the insulin-like growth factor pathway. May also be involved in limb tendon and ligament development. Plays a role in cell proliferation and migration. The polypeptide is Homeobox protein SIX2 (Six2) (Mus musculus (Mouse)).